A 190-amino-acid polypeptide reads, in one-letter code: U1 small nuclear ribonucleoprotein C-1 (190 aa).

The Matrin-type zinc-finger motif lies at 4–36 (YYCDYCDVFLVSESPSVRKAHNSGRNHLTNVRD). A disordered region spans residues 57–190 (FETGGGNSTS…PDRARQLGLI (134 aa)). Over residues 72 to 82 (GNPPGSQPGPP) the composition is skewed to pro residues. Residues 109–124 (AMLALMNGQNGMSSPG) are compositionally biased toward low complexity. Positions 125 to 141 (SGPPPMRFAGPPIPNNM) are enriched in pro residues. Over residues 180-190 (NPDRARQLGLI) the composition is skewed to basic and acidic residues.

It belongs to the U1 small nuclear ribonucleoprotein C family. As to quaternary structure, U1 snRNP is composed of the 7 core Sm proteins B/B', D1, D2, D3, E, F and G that assemble in a heptameric protein ring on the Sm site of the small nuclear RNA to form the core snRNP, and at least 3 U1 snRNP-specific proteins U1-70K, U1-A and U1-C. U1-C interacts with U1 snRNA and the 5' splice-site region of the pre-mRNA.

It localises to the nucleus. In terms of biological role, component of the spliceosomal U1 snRNP, which is essential for recognition of the pre-mRNA 5' splice-site and the subsequent assembly of the spliceosome. U1-C is directly involved in initial 5' splice-site recognition for both constitutive and regulated alternative splicing. The interaction with the 5' splice-site seems to precede base-pairing between the pre-mRNA and the U1 snRNA. Stimulates commitment or early (E) complex formation by stabilizing the base pairing of the 5' end of the U1 snRNA and the 5' splice-site region. The polypeptide is U1 small nuclear ribonucleoprotein C-1 (Puccinia graminis f. sp. tritici (strain CRL 75-36-700-3 / race SCCL) (Black stem rust fungus)).